A 200-amino-acid chain; its full sequence is Recombination protein RecR (200 aa).

Residues 58-73 form a C4-type zinc finger; it reads CEVCHNLAEEGLCAIC. The 96-residue stretch at 81–176 folds into the Toprim domain; that stretch reads GLICVVEEPV…DISRLAYGMP (96 aa).

The protein belongs to the RecR family.

In terms of biological role, may play a role in DNA repair. It seems to be involved in an RecBC-independent recombinational process of DNA repair. It may act with RecF and RecO. This is Recombination protein RecR from Magnetococcus marinus (strain ATCC BAA-1437 / JCM 17883 / MC-1).